The sequence spans 284 residues: CBY1-interacting BAR domain-containing protein 1-A (284 aa).

A mitochondrion-targeting transit peptide spans 1 to 48 (MSQTPEARARDNQTRQIQESVNNVEKHFGELCQIFAGYVRKTARLRDK). A BAR-like region spans residues 11–221 (DNQTRQIQES…DIDEEEDLEV (211 aa)). Coiled-coil stretches lie at residues 142-184 (RQII…IKKL) and 260-284 (NRQK…EDEN). The segment covering 242-261 (SRTGSTSRGPSVISQPPGNR) has biased composition (polar residues). The interval 242-284 (SRTGSTSRGPSVISQPPGNRQKNRIEDEDEEEEDDENSTEDEN) is disordered. Positions 267–284 (EDEDEEEEDDENSTEDEN) are enriched in acidic residues.

It belongs to the CIBAR family.

The protein resides in the cytoplasm. It localises to the cytoskeleton. It is found in the microtubule organizing center. The protein localises to the centrosome. Its subcellular location is the centriole. The protein resides in the nucleus. It localises to the mitochondrion inner membrane. It is found in the cell projection. The protein localises to the cilium. Its subcellular location is the flagellum. Its function is as follows. Plays a critical role in regulating mitochondrial ultrastructure and function by maintaining the integrity of mitochondrial morphology, particularly the organization of cristae. Plays a crucial role in ciliogenesis. Plays a key role in the correct positioning of the annulus, a septin-based ring structure in the sperm flagellum, serving both as a physical barrier and a membrane diffusion barrier that separates the midpiece (MP) from the principal piece (PP). The polypeptide is CBY1-interacting BAR domain-containing protein 1-A (Xenopus laevis (African clawed frog)).